The chain runs to 591 residues: Aspartate--tRNA(Asp/Asn) ligase (591 aa).

Position 175 (E175) interacts with L-aspartate. An aspartate region spans residues 199–202 (QQFK). 2 residues coordinate L-aspartate: R221 and H453. Residue 221-223 (RDE) coordinates ATP. An ATP-binding site is contributed by E486. R493 contacts L-aspartate. Residue 538–541 (GIDR) participates in ATP binding.

It belongs to the class-II aminoacyl-tRNA synthetase family. Type 1 subfamily. As to quaternary structure, homodimer.

Its subcellular location is the cytoplasm. It catalyses the reaction tRNA(Asx) + L-aspartate + ATP = L-aspartyl-tRNA(Asx) + AMP + diphosphate. In terms of biological role, aspartyl-tRNA synthetase with relaxed tRNA specificity since it is able to aspartylate not only its cognate tRNA(Asp) but also tRNA(Asn). Reaction proceeds in two steps: L-aspartate is first activated by ATP to form Asp-AMP and then transferred to the acceptor end of tRNA(Asp/Asn). The protein is Aspartate--tRNA(Asp/Asn) ligase of Roseobacter denitrificans (strain ATCC 33942 / OCh 114) (Erythrobacter sp. (strain OCh 114)).